A 331-amino-acid chain; its full sequence is Olfactory receptor 6B3 (331 aa).

Topologically, residues 1–25 (MSGENVTRVGTFILVGFPTAPGLQY) are extracellular. Asn5 carries N-linked (GlcNAc...) asparagine glycosylation. Residues 26–46 (LLFLLFLLTYLFVLVENLAII) form a helical membrane-spanning segment. The Cytoplasmic portion of the chain corresponds to 47-54 (LTVWSSTS). A helical membrane pass occupies residues 55-75 (LHRPMYYFLSSMSFLEIWYVS). Residues 76–99 (DITPKMLEGFLLQQKRISFVGCMT) are Extracellular-facing. Residues Cys97 and Cys189 are joined by a disulfide bond. Residues 100–120 (QLYFFSSLVCTECVLLASMAY) traverse the membrane as a helical segment. Topologically, residues 121–139 (DRYVAICHPLRYHVLVTPG) are cytoplasmic. Residues 140-160 (LCLQLVGFSFVSGFTISMIKV) form a helical membrane-spanning segment. The Extracellular segment spans residues 161-196 (CFISSVTFCGSNVLNHFFCDISPILKLACTDFSTAE). The helical transmembrane segment at 197–217 (LVDFILAFIILVFPLLATMLS) threads the bilayer. Topologically, residues 218-237 (YAHITLAVLRIPSATGCWRA) are cytoplasmic. A helical transmembrane segment spans residues 238 to 258 (FFTCASHLTVVTVFYTALLFM). Topologically, residues 259–271 (YVRPQAIDSRSSN) are extracellular. A helical transmembrane segment spans residues 272–292 (KLISVLYTVITPILNPLIYCL). The Cytoplasmic portion of the chain corresponds to 293-331 (RNKEFKNALKKAFGLTSCAVEGRLSSLLELHLQIHSQPL).

It belongs to the G-protein coupled receptor 1 family.

The protein resides in the cell membrane. Odorant receptor. This is Olfactory receptor 6B3 (OR6B3) from Homo sapiens (Human).